We begin with the raw amino-acid sequence, 185 residues long: Ribosome-recycling factor (185 aa).

Belongs to the RRF family.

The protein localises to the cytoplasm. Responsible for the release of ribosomes from messenger RNA at the termination of protein biosynthesis. May increase the efficiency of translation by recycling ribosomes from one round of translation to another. The protein is Ribosome-recycling factor of Wolbachia pipientis subsp. Culex pipiens (strain wPip).